A 566-amino-acid polypeptide reads, in one-letter code: Membrane protein insertase YidC (566 aa).

Helical transmembrane passes span 3-23, 346-366, 369-389, 436-456, and 509-529; these read IKRI…FNAW, GWLW…HAVV, WGWS…WFSA, GGCL…YVII, and MWIL…GLVL.

This sequence belongs to the OXA1/ALB3/YidC family. Type 1 subfamily. As to quaternary structure, interacts with the Sec translocase complex via SecD. Specifically interacts with transmembrane segments of nascent integral membrane proteins during membrane integration.

It is found in the cell inner membrane. Its function is as follows. Required for the insertion and/or proper folding and/or complex formation of integral membrane proteins into the membrane. Involved in integration of membrane proteins that insert both dependently and independently of the Sec translocase complex, as well as at least some lipoproteins. Aids folding of multispanning membrane proteins. This is Membrane protein insertase YidC from Coxiella burnetii (strain CbuK_Q154) (Coxiella burnetii (strain Q154)).